The sequence spans 248 residues: Ribosomal RNA small subunit methyltransferase J (248 aa).

Residues 101 to 102 (RD), 117 to 118 (ER), 153 to 154 (SS), and aspartate 171 contribute to the S-adenosyl-L-methionine site.

The protein belongs to the methyltransferase superfamily. RsmJ family.

It localises to the cytoplasm. It carries out the reaction guanosine(1516) in 16S rRNA + S-adenosyl-L-methionine = N(2)-methylguanosine(1516) in 16S rRNA + S-adenosyl-L-homocysteine + H(+). In terms of biological role, specifically methylates the guanosine in position 1516 of 16S rRNA. This Proteus mirabilis (strain HI4320) protein is Ribosomal RNA small subunit methyltransferase J.